The chain runs to 393 residues: Formate-dependent phosphoribosylglycinamide formyltransferase (393 aa).

N(1)-(5-phospho-beta-D-ribosyl)glycinamide contacts are provided by residues 22-23 and glutamate 82; that span reads EL. ATP-binding positions include arginine 114, lysine 155, 160 to 165, 195 to 198, and glutamate 203; these read SSGKGQ and EGFV. The ATP-grasp domain maps to 119 to 308; sequence RLAAEELGLP…EFALHARAIL (190 aa). Mg(2+) contacts are provided by glutamate 267 and glutamate 279. Residues aspartate 286, lysine 356, and 363–364 each bind N(1)-(5-phospho-beta-D-ribosyl)glycinamide; that span reads RR.

It belongs to the PurK/PurT family. Homodimer.

The enzyme catalyses N(1)-(5-phospho-beta-D-ribosyl)glycinamide + formate + ATP = N(2)-formyl-N(1)-(5-phospho-beta-D-ribosyl)glycinamide + ADP + phosphate + H(+). It functions in the pathway purine metabolism; IMP biosynthesis via de novo pathway; N(2)-formyl-N(1)-(5-phospho-D-ribosyl)glycinamide from N(1)-(5-phospho-D-ribosyl)glycinamide (formate route): step 1/1. Its function is as follows. Involved in the de novo purine biosynthesis. Catalyzes the transfer of formate to 5-phospho-ribosyl-glycinamide (GAR), producing 5-phospho-ribosyl-N-formylglycinamide (FGAR). Formate is provided by PurU via hydrolysis of 10-formyl-tetrahydrofolate. The sequence is that of Formate-dependent phosphoribosylglycinamide formyltransferase from Nitratidesulfovibrio vulgaris (strain DSM 19637 / Miyazaki F) (Desulfovibrio vulgaris).